Here is a 182-residue protein sequence, read N- to C-terminus: MSNQELKDNMHKSVEATQRNFATIRTGRANPSLLDRINVEYYGTETPLKSLATISTPDSQTIAIQPFDNGSMGLIEKAIATSDLGLTPNNDGKIIRINVPPLTEERRKEFCKLAARYAEEGKVALRNIRRDAIDKVKKLEKDAELSKDQSHDEQDGIQKLTDTFITEIEKYLAEKEADILKV.

The protein belongs to the RRF family.

The protein resides in the cytoplasm. Its function is as follows. Responsible for the release of ribosomes from messenger RNA at the termination of protein biosynthesis. May increase the efficiency of translation by recycling ribosomes from one round of translation to another. The sequence is that of Ribosome-recycling factor from Prochlorococcus marinus (strain MIT 9313).